Here is an 83-residue protein sequence, read N- to C-terminus: Short neurotoxin OKI-01/OKI-19 (83 aa).

The N-terminal stretch at 1–21 (MKTLLLTLVVVTIVCLDLGYT) is a signal peptide. 4 cysteine pairs are disulfide-bonded: C24–C45, C38–C62, C64–C75, and C76–C81.

This sequence belongs to the three-finger toxin family. Short-chain subfamily. Type I alpha-neurotoxin sub-subfamily. As to expression, expressed by the venom gland.

It is found in the secreted. Binds to muscle nicotinic acetylcholine receptor (nAChR) and inhibit acetylcholine from binding to the receptor, thereby impairing neuromuscular transmission. The protein is Short neurotoxin OKI-01/OKI-19 of Laticauda laticaudata (Blue-ringed sea krait).